A 407-amino-acid chain; its full sequence is 3-oxoacyl-[acyl-carrier-protein] synthase 1 (407 aa).

Positions 1 to 406 (MKRVVITGFG…GTNVSLILKK (406 aa)) constitute a Ketosynthase family 3 (KS3) domain. Active-site for beta-ketoacyl synthase activity residues include cysteine 164, histidine 300, and histidine 336.

Belongs to the thiolase-like superfamily. Beta-ketoacyl-ACP synthases family. In terms of assembly, homodimer.

It is found in the cytoplasm. The enzyme catalyses a fatty acyl-[ACP] + malonyl-[ACP] + H(+) = a 3-oxoacyl-[ACP] + holo-[ACP] + CO2. It catalyses the reaction (3Z)-decenoyl-[ACP] + malonyl-[ACP] + H(+) = 3-oxo-(5Z)-dodecenoyl-[ACP] + holo-[ACP] + CO2. The protein operates within lipid metabolism; fatty acid biosynthesis. Involved in the type II fatty acid elongation cycle. Catalyzes the elongation of a wide range of acyl-ACP by the addition of two carbons from malonyl-ACP to an acyl acceptor. Can also use unsaturated fatty acids. Catalyzes a key reaction in unsaturated fatty acid (UFA) synthesis, the elongation of the cis-3-decenoyl-ACP produced by FabA. This is 3-oxoacyl-[acyl-carrier-protein] synthase 1 (fabB) from Buchnera aphidicola subsp. Schizaphis graminum (strain Sg).